Here is a 697-residue protein sequence, read N- to C-terminus: MVSESTEAPTPAPGSVREHWNELAEDVRQHQFRYYVRDAPIISDGEFDALLGELNDLENQYPDLRTPDSPTQLVGGGFATDFASADHLERMLSLDNVFATDELRTWISRVEQETGPDLHYLCEVKIDGVALNLVYENGRLVRAATRGDGRTGEEVTLNARTIDDIPEKLTGTDKYPIPALLEVRGEVFFRLEDFAALNAALVEEGKAPFANPRNSAAGSLRQKNPAVTARRRLGMICHGLGRSEGFEPASQYDAYTALAAWGLPVSTHTVRVTGADAVVDRVQYWGEHRHDVEHEIDGLVVKVDETSLQRRLGSTSRAPRWAIAYKYPPEEATTKLLDIRVNVGRTGRVTPFAYMEPVTVAGSTVSLATLHNGSEVKRKGVLIGDTVVLRKAGDVIPEVLGPVVDARTGDEYEFVMPANCPECDTPLAPAKEGDADIRCPNQQYCPAQLRERVFHVAGRGAFDIEVLGYEAATSLLEAKAIGDEGDLFSLTEDDLLKTTLFRTKAGGLSANGRRLLDNLDSAKDKPLWRVLVALSIRHVGPTAARALAGEFGSLDRIRESSVEELAAVDGVGGTIAAAVAEWFGVDWHRQIVDKWSAAGVRMEDERDESIPRNLEGLSIVVTGSLETFSRDQAKEAILVRGGKAAGSVSKKTAFVVAGESPGSKHDKAVELGVPVLDEDGFRRLLEGGPDAVTDSGV.

Residues 44–48 (DGEFD), 93–94 (SL), and Glu123 each bind NAD(+). The N6-AMP-lysine intermediate role is filled by Lys125. NAD(+) is bound by residues Arg146, Glu186, Lys302, and Lys326. Cys420, Cys423, Cys439, and Cys445 together coordinate Zn(2+). Residues 609 to 697 (SIPRNLEGLS…GPDAVTDSGV (89 aa)) form the BRCT domain.

It belongs to the NAD-dependent DNA ligase family. LigA subfamily. Mg(2+) is required as a cofactor. The cofactor is Mn(2+).

The catalysed reaction is NAD(+) + (deoxyribonucleotide)n-3'-hydroxyl + 5'-phospho-(deoxyribonucleotide)m = (deoxyribonucleotide)n+m + AMP + beta-nicotinamide D-nucleotide.. DNA ligase that catalyzes the formation of phosphodiester linkages between 5'-phosphoryl and 3'-hydroxyl groups in double-stranded DNA using NAD as a coenzyme and as the energy source for the reaction. It is essential for DNA replication and repair of damaged DNA. The sequence is that of DNA ligase from Rhodococcus opacus (strain B4).